Reading from the N-terminus, the 132-residue chain is MDVTRLLLATLLVFLCFFTAYSHPPPEEKLRDDRSLRSNSSVNLLDFPSVSIVALNKNSKQISRKEAEKKRSSKKEASMKKVARPRTPLSAPCVATRDSCKPPAPACCDPCASCQCRFFRSACSCRVLSLNC.

The first 22 residues, 1–22 (MDVTRLLLATLLVFLCFFTAYS), serve as a signal peptide directing secretion. The N-linked (GlcNAc...) asparagine glycan is linked to Asn-39. The interval 61–87 (QISRKEAEKKRSSKKEASMKKVARPRT) is disordered. Residues 63–79 (SRKEAEKKRSSKKEASM) show a composition bias toward basic and acidic residues. Disulfide bonds link Cys-93–Cys-108, Cys-100–Cys-114, Cys-107–Cys-125, Cys-111–Cys-132, and Cys-116–Cys-123. The Agouti domain occupies 93–132 (CVATRDSCKPPAPACCDPCASCQCRFFRSACSCRVLSLNC).

Its subcellular location is the secreted. In terms of biological role, involved in the regulation of melanogenesis. The binding of ASP to MC1R precludes alpha-MSH initiated signaling and thus blocks production of cAMP, leading to a down-regulation of eumelanogenesis (brown/black pigment) and thus increasing synthesis of pheomelanin (yellow/red pigment). The chain is Agouti-signaling protein (ASIP) from Macaca maura (Moor macaque).